A 426-amino-acid polypeptide reads, in one-letter code: O-methyltransferase pyvH (426 aa).

S-adenosyl-L-methionine-binding positions include 258-259, Asp281, 308-309, and Arg323; these read GG and DF. Catalysis depends on His327, which acts as the Proton acceptor.

The protein belongs to the class I-like SAM-binding methyltransferase superfamily. Cation-independent O-methyltransferase family.

The protein operates within secondary metabolite biosynthesis. Functionally, O-methyltransferase; part of the gene cluster that mediates the biosynthesis of pyranoviolin A, a pyranonigrin analog with a C-3 methoxy group. Initially, the PKS portion of pyvA synthesizes C-10 carbon chain from 5 molecules of malonyl-CoA, which is then condensed with the thiolation (T) domain-bound glycine activated by the adenylation (A) domain. The subsequent chain release by Dieckmann condensation (DKC) could be catalyzed by the TE domain present at the C-terminus of pyvA and/or the alpha/beta hydrolase pyvD, installing the tetramic acid moiety. The FAD-dependent monooxygenase pyvC next epoxidizes one of the olefins of the polyketide part, and the epoxide ring-opening induces the dihydro-gamma-pyrone ring formation. The cytochrome P450 monooxygeanse pyvB would be responsible for the 2 consecutive reactions, in which the dihydro-gamma-pyrone is oxidized to gamma-pyrone and C-7 is hydroxylated to yield pyranonigrin F. Finally, the O-methyltransferase pyvH methylates the C-3 hydroxy group to complete the biosynthesis. The protein is O-methyltransferase pyvH of Aspergillus violaceofuscus (strain CBS 115571).